The sequence spans 474 residues: Cyclin-dependent kinase 18 (474 aa).

A phosphoserine mark is found at S14, S74, S89, S98, S117, and S132. Residues 44-93 (NLQLGPLGRDPPQECSTFSPTDSGEEPGQLSPGVQFQRRQNQRRFSMEDV) are disordered. Residues 144-425 (YVKLDKLGEG…AEAALSHSYF (282 aa)) enclose the Protein kinase domain. ATP-binding positions include 150–158 (LGEGTYATV) and K173. D265 (proton acceptor) is an active-site residue. Residues S440 and S443 each carry the phosphoserine modification.

The protein belongs to the protein kinase superfamily. CMGC Ser/Thr protein kinase family. CDC2/CDKX subfamily. Isoform 2 expression is limited to several subcortical nuclei of the basal gangli and the spinal cord. Isoform 1 is widely expressed.

It carries out the reaction L-seryl-[protein] + ATP = O-phospho-L-seryl-[protein] + ADP + H(+). The enzyme catalyses L-threonyl-[protein] + ATP = O-phospho-L-threonyl-[protein] + ADP + H(+). In terms of biological role, may play a role in signal transduction cascades in terminally differentiated cells. The protein is Cyclin-dependent kinase 18 (CDK18) of Homo sapiens (Human).